Here is a 224-residue protein sequence, read N- to C-terminus: tRNA (guanine-N(7)-)-methyltransferase (224 aa).

Residues Glu-56, Glu-81, Asp-108, and Asp-131 each contribute to the S-adenosyl-L-methionine site. Residue Asp-131 is part of the active site. Residues Lys-135, Asp-167, and 202–205 (TKFE) contribute to the substrate site.

Belongs to the class I-like SAM-binding methyltransferase superfamily. TrmB family.

The enzyme catalyses guanosine(46) in tRNA + S-adenosyl-L-methionine = N(7)-methylguanosine(46) in tRNA + S-adenosyl-L-homocysteine. It participates in tRNA modification; N(7)-methylguanine-tRNA biosynthesis. In terms of biological role, catalyzes the formation of N(7)-methylguanine at position 46 (m7G46) in tRNA. The chain is tRNA (guanine-N(7)-)-methyltransferase from Nitrosomonas eutropha (strain DSM 101675 / C91 / Nm57).